Reading from the N-terminus, the 258-residue chain is Snake venom serine protease KN12 (258 aa).

The signal sequence occupies residues methionine 1–alanine 18. A propeptide spanning residues glutamine 19–leucine 24 is cleaved from the precursor. The Peptidase S1 domain maps to valine 25–alanine 249. Disulfide bonds link cysteine 31–cysteine 163, cysteine 50–cysteine 66, cysteine 98–cysteine 256, cysteine 142–cysteine 210, cysteine 174–cysteine 189, and cysteine 200–cysteine 225. The Charge relay system role is filled by histidine 65. N-linked (GlcNAc...) asparagine glycosylation occurs at asparagine 103. Aspartate 110 serves as the catalytic Charge relay system. Residues asparagine 121, asparagine 122, asparagine 154, and asparagine 170 are each glycosylated (N-linked (GlcNAc...) asparagine). Serine 204 serves as the catalytic Charge relay system. Asparagine 251 carries an N-linked (GlcNAc...) asparagine glycan.

It belongs to the peptidase S1 family. Snake venom subfamily. Monomer. As to expression, expressed by the venom gland.

Its subcellular location is the secreted. Functionally, snake venom serine protease that may act in the hemostasis system of the prey. This chain is Snake venom serine protease KN12, found in Trimeresurus stejnegeri (Chinese green tree viper).